The sequence spans 281 residues: Acetyl-coenzyme A carboxylase carboxyl transferase subunit beta (281 aa).

Residues 1 to 23 (MAWFKREKKGISTSTEEKKEAPD) form a disordered region. Residues 25-281 (LWNKCPNCKK…LAAFLKMMKN (257 aa)) form the CoA carboxyltransferase N-terminal domain. Zn(2+)-binding residues include Cys-29, Cys-32, Cys-48, and Cys-51. A C4-type zinc finger spans residues 29 to 51 (CPNCKKALHSADLLENKYVCQYC).

Belongs to the AccD/PCCB family. Acetyl-CoA carboxylase is a heterohexamer composed of biotin carboxyl carrier protein (AccB), biotin carboxylase (AccC) and two subunits each of ACCase subunit alpha (AccA) and ACCase subunit beta (AccD). Zn(2+) serves as cofactor.

Its subcellular location is the cytoplasm. The catalysed reaction is N(6)-carboxybiotinyl-L-lysyl-[protein] + acetyl-CoA = N(6)-biotinyl-L-lysyl-[protein] + malonyl-CoA. It participates in lipid metabolism; malonyl-CoA biosynthesis; malonyl-CoA from acetyl-CoA: step 1/1. Component of the acetyl coenzyme A carboxylase (ACC) complex. Biotin carboxylase (BC) catalyzes the carboxylation of biotin on its carrier protein (BCCP) and then the CO(2) group is transferred by the transcarboxylase to acetyl-CoA to form malonyl-CoA. This is Acetyl-coenzyme A carboxylase carboxyl transferase subunit beta from Pedobacter heparinus (strain ATCC 13125 / DSM 2366 / CIP 104194 / JCM 7457 / NBRC 12017 / NCIMB 9290 / NRRL B-14731 / HIM 762-3).